Reading from the N-terminus, the 150-residue chain is UPF0735 ACT domain-containing protein Helmi_18680 (150 aa).

One can recognise an ACT domain in the interval 72–147 (SVSLLLEHHP…GVRSAQLVGS (76 aa)).

Belongs to the UPF0735 family.

In Heliobacterium modesticaldum (strain ATCC 51547 / Ice1), this protein is UPF0735 ACT domain-containing protein Helmi_18680.